A 179-amino-acid polypeptide reads, in one-letter code: Cell division protein SepF (179 aa).

The tract at residues 18–57 (EDSTVPYEKGNEPVFTPVNSSQEPDLPMNQPSQSAGAKDS) is disordered. The segment covering 34–57 (PVNSSQEPDLPMNQPSQSAGAKDS) has biased composition (polar residues).

Belongs to the SepF family. In terms of assembly, homodimer. Interacts with FtsZ.

It localises to the cytoplasm. Cell division protein that is part of the divisome complex and is recruited early to the Z-ring. Probably stimulates Z-ring formation, perhaps through the cross-linking of FtsZ protofilaments. Its function overlaps with FtsA. The chain is Cell division protein SepF from Streptococcus pneumoniae (strain Hungary19A-6).